A 121-amino-acid chain; its full sequence is Large ribosomal subunit protein bL12 (121 aa).

Belongs to the bacterial ribosomal protein bL12 family. In terms of assembly, homodimer. Part of the ribosomal stalk of the 50S ribosomal subunit. Forms a multimeric L10(L12)X complex, where L10 forms an elongated spine to which 2 to 4 L12 dimers bind in a sequential fashion. Binds GTP-bound translation factors.

In terms of biological role, forms part of the ribosomal stalk which helps the ribosome interact with GTP-bound translation factors. Is thus essential for accurate translation. This chain is Large ribosomal subunit protein bL12, found in Shewanella baltica (strain OS223).